Reading from the N-terminus, the 329-residue chain is Sialic acid-binding periplasmic protein SiaP (329 aa).

The signal sequence occupies residues 1 to 23 (MMKLTKLFLATAISLGVSSAVLA). Residues asparagine 33, aspartate 72, glutamate 90, arginine 150, arginine 170, and asparagine 210 each coordinate N-acetyl-beta-neuraminate.

This sequence belongs to the bacterial solute-binding protein 7 family. The complex comprises the extracytoplasmic solute receptor protein SiaP, and the fused transmembrane protein SiaT.

Its subcellular location is the periplasm. Its function is as follows. Part of the tripartite ATP-independent periplasmic (TRAP) transport system SiaPT involved in the uptake of sialic acid (N-acetyl-beta-neuraminate). This protein specifically binds sialic acid with high affinity. N-Acetylneuraminate (sialic acid) can then be incorporated into the lipooligosaccharides (LOS) as a terminal non-reducing sugar, protecting the bacterium from complement-mediated killing by normal human serum. This chain is Sialic acid-binding periplasmic protein SiaP (siaP), found in Haemophilus influenzae (strain ATCC 51907 / DSM 11121 / KW20 / Rd).